Here is a 146-residue protein sequence, read N- to C-terminus: UPF0735 ACT domain-containing protein TTE2621 (146 aa).

The 76-residue stretch at 71 to 146 (TFSMVLEHMP…GVRKIEVLGE (76 aa)) folds into the ACT domain.

Belongs to the UPF0735 family.

This is UPF0735 ACT domain-containing protein TTE2621 from Caldanaerobacter subterraneus subsp. tengcongensis (strain DSM 15242 / JCM 11007 / NBRC 100824 / MB4) (Thermoanaerobacter tengcongensis).